We begin with the raw amino-acid sequence, 643 residues long: Pescadillo homolog (643 aa).

Over residues 305–323 (EKTKEKNHKSDNNPHEHTT) the composition is skewed to basic and acidic residues. Positions 305-329 (EKTKEKNHKSDNNPHEHTTNIDNNN) are disordered. Residues 378-474 (KLKELFKNHI…NILPCSDYLT (97 aa)) enclose the BRCT domain. The stretch at 531–615 (NYKEEEEEEN…IVLSKKKRKL (85 aa)) forms a coiled coil.

This sequence belongs to the pescadillo family. In terms of assembly, interacts with dual specificity protein phosphatase YVH1.

It is found in the nucleus. Its subcellular location is the nucleolus. It localises to the nucleoplasm. Its function is as follows. Required for maturation of ribosomal RNAs and formation of the large ribosomal subunit. The sequence is that of Pescadillo homolog from Plasmodium falciparum (isolate 3D7).